Here is a 694-residue protein sequence, read N- to C-terminus: GRB2-associated-binding protein 1 (694 aa).

S2 carries the post-translational modification N-acetylserine. One can recognise a PH domain in the interval 5-116; sequence EVVCSGWLRK…WVRCICDICG (112 aa). Positions 194 to 203 are enriched in basic and acidic residues; sequence PEPTRTHADS. The segment at 194–231 is disordered; that stretch reads PEPTRTHADSAKSTSSETDCNDNVPSHKNPASSQSKHG. Polar residues predominate over residues 204-230; it reads AKSTSSETDCNDNVPSHKNPASSQSKH. Phosphoserine occurs at positions 251, 253, 266, and 304. Positions 309–378 are disordered; that stretch reads IPPTPGNTYQ…TDSSYCIPTA (70 aa). The span at 358–374 shows a compositional bias: polar residues; the sequence is DTCSITRTASDTDSSYC. T387 bears the Phosphothreonine mark. A phosphoserine mark is found at S402 and S454. Disordered regions lie at residues 492–532 and 560–656; these read PAHM…VKPA and DSSR…ADER. The segment covering 594–611 has biased composition (polar residues); the sequence is PNLSSEDSNLFGSNSLDG. The residue at position 627 (Y627) is a Phosphotyrosine. The residue at position 638 (T638) is a Phosphothreonine. S651 carries the post-translational modification Phosphoserine. Y659 is modified (phosphotyrosine). A disordered region spans residues 668–694; sequence LALKSTREAWTDGRQSTESETPAKNVK. Residues 672 to 684 are compositionally biased toward basic and acidic residues; it reads STREAWTDGRQST. S683 is subject to Phosphoserine. The span at 685-694 shows a compositional bias: polar residues; it reads ESETPAKNVK.

It belongs to the GAB family. As to quaternary structure, identified in a complex containing FRS2, GRB2, GAB1, PIK3R1 and SOS1. Forms a tripartite complex containing GAB1, METTL13 and SPRY2. Within the complex interacts with METTL13. Interacts with GRB2 and with other SH2-containing proteins. Interacts with phosphorylated LAT2. Interacts with PTPRJ. Interacts (phosphorylated) with PTPN11. Interacts with HCK. In terms of processing, phosphorylated in response to FGFR1 activation. Phosphorylated on tyrosine residue(s) by the epidermal growth factor receptor (EGFR) and the insulin receptor (INSR). Tyrosine phosphorylation of GAB1 mediates interaction with several proteins that contain SH2 domains. Phosphorylated on tyrosine residues by HCK upon IL6 signaling.

Its function is as follows. Adapter protein that plays a role in intracellular signaling cascades triggered by activated receptor-type kinases. Plays a role in FGFR1 signaling. Probably involved in signaling by the epidermal growth factor receptor (EGFR) and the insulin receptor (INSR). Involved in the MET/HGF-signaling pathway. The protein is GRB2-associated-binding protein 1 (GAB1) of Bos taurus (Bovine).